The chain runs to 307 residues: Small ribosomal subunit biogenesis GTPase RsgA (307 aa).

The disordered stretch occupies residues 1 to 21 (MPSEHPFSDGIPTPNPKETMN). One can recognise a CP-type G domain in the interval 85 to 242 (RQDAWKTKLI…LIDSPGLQEF (158 aa)). GTP contacts are provided by residues 135-138 (NKAD) and 184-192 (GQSGMGKST). Residues Cys266, Cys271, His273, and Cys279 each coordinate Zn(2+).

The protein belongs to the TRAFAC class YlqF/YawG GTPase family. RsgA subfamily. As to quaternary structure, monomer. Associates with 30S ribosomal subunit, binds 16S rRNA. Zn(2+) serves as cofactor.

It localises to the cytoplasm. One of several proteins that assist in the late maturation steps of the functional core of the 30S ribosomal subunit. Helps release RbfA from mature subunits. May play a role in the assembly of ribosomal proteins into the subunit. Circularly permuted GTPase that catalyzes slow GTP hydrolysis, GTPase activity is stimulated by the 30S ribosomal subunit. This Neisseria meningitidis serogroup B (strain ATCC BAA-335 / MC58) protein is Small ribosomal subunit biogenesis GTPase RsgA.